Reading from the N-terminus, the 148-residue chain is Large ribosomal subunit protein uL15 (148 aa).

The disordered stretch occupies residues 18–38 (GYGRVGKHRKHPGGRGNAGGL).

The protein belongs to the universal ribosomal protein uL15 family.

The sequence is that of Large ribosomal subunit protein uL15 (rpl27a) from Dictyostelium discoideum (Social amoeba).